Consider the following 89-residue polypeptide: Defensin-like protein 250 (89 aa).

An N-terminal signal peptide occupies residues 1-23; that stretch reads MKLAAIFLVSCVLLSLLPSLTIA. 4 disulfide bridges follow: Cys-29–Cys-86, Cys-40–Cys-69, Cys-48–Cys-79, and Cys-67–Cys-81.

It belongs to the DEFL family.

Its subcellular location is the secreted. The sequence is that of Defensin-like protein 250 (SCRL8) from Arabidopsis thaliana (Mouse-ear cress).